The following is a 516-amino-acid chain: BAR/IMD domain-containing adapter protein 2-like 2 (516 aa).

The region spanning 1–227 (MSGVNSDLLH…PTPLDQEAQL (227 aa)) is the IMD domain. Positions 200–273 (ADGWKEKVSE…SSSVGESLGL (74 aa)) are disordered. A compositionally biased stretch (basic and acidic residues) spans 201–212 (DGWKEKVSESRS). Residues 226–236 (QLKSSVGSLLQ) show a composition bias toward polar residues. The segment covering 238-247 (GDREMDREPL) has biased composition (basic and acidic residues). A compositionally biased stretch (low complexity) spans 249–270 (RVPSRAPSPLPSRSRSSSVGES). In terms of domain architecture, SH3 spans 274–337 (GGGRSMRAIV…PAAYVASTED (64 aa)). A compositionally biased stretch (polar residues) spans 355-376 (LLEPTSQSESDTQTYSEVSSPV). The disordered stretch occupies residues 355 to 516 (LLEPTSQSES…TNDRSAPRIQ (162 aa)). Residues 434–450 (PDRRAESHFESKVELKN) show a composition bias toward basic and acidic residues. Residues 454 to 465 (LPPPAPPLPNSP) show a composition bias toward pro residues.

It localises to the cell membrane. Functionally, phosphoinositides-binding protein that induces the formation of planar or gently curved membrane structures. The protein is BAR/IMD domain-containing adapter protein 2-like 2 (baiap2l2) of Danio rerio (Zebrafish).